The sequence spans 306 residues: 4-diphosphocytidyl-2-C-methyl-D-erythritol kinase (306 aa).

Lys23 is an active-site residue. 108 to 118 (PIAAGIGGGSA) is an ATP binding site. Asp150 is an active-site residue.

It belongs to the GHMP kinase family. IspE subfamily.

The catalysed reaction is 4-CDP-2-C-methyl-D-erythritol + ATP = 4-CDP-2-C-methyl-D-erythritol 2-phosphate + ADP + H(+). The protein operates within isoprenoid biosynthesis; isopentenyl diphosphate biosynthesis via DXP pathway; isopentenyl diphosphate from 1-deoxy-D-xylulose 5-phosphate: step 3/6. Functionally, catalyzes the phosphorylation of the position 2 hydroxy group of 4-diphosphocytidyl-2C-methyl-D-erythritol. The protein is 4-diphosphocytidyl-2-C-methyl-D-erythritol kinase of Rhodopseudomonas palustris (strain BisB18).